The sequence spans 311 residues: HPr kinase/phosphorylase (311 aa).

Active-site residues include His-139 and Lys-160. 154–161 contacts ATP; sequence GQSGVGKS. Residue Ser-161 participates in Mg(2+) binding. Asp-178 serves as the catalytic Proton acceptor; for phosphorylation activity. Proton donor; for dephosphorylation activity. The important for the catalytic mechanism of both phosphorylation and dephosphorylation stretch occupies residues 202–211; it reads LEIRGIGIID. Residue Glu-203 participates in Mg(2+) binding. Residue Arg-244 is part of the active site. An important for the catalytic mechanism of dephosphorylation region spans residues 265–270; sequence PVRPGR.

This sequence belongs to the HPrK/P family. As to quaternary structure, homohexamer. The cofactor is Mg(2+).

The enzyme catalyses [HPr protein]-L-serine + ATP = [HPr protein]-O-phospho-L-serine + ADP + H(+). It carries out the reaction [HPr protein]-O-phospho-L-serine + phosphate + H(+) = [HPr protein]-L-serine + diphosphate. In terms of biological role, catalyzes the ATP- as well as the pyrophosphate-dependent phosphorylation of a specific serine residue in HPr, a phosphocarrier protein of the phosphoenolpyruvate-dependent sugar phosphotransferase system (PTS). HprK/P also catalyzes the pyrophosphate-producing, inorganic phosphate-dependent dephosphorylation (phosphorolysis) of seryl-phosphorylated HPr (P-Ser-HPr). The two antagonistic activities of HprK/P are regulated by several intracellular metabolites, which change their concentration in response to the absence or presence of rapidly metabolisable carbon sources (glucose, fructose, etc.) in the growth medium. Therefore, by controlling the phosphorylation state of HPr, HPrK/P is a sensor enzyme that plays a major role in the regulation of carbon metabolism and sugar transport: it mediates carbon catabolite repression (CCR), and regulates PTS-catalyzed carbohydrate uptake and inducer exclusion. This chain is HPr kinase/phosphorylase, found in Exiguobacterium sp. (strain ATCC BAA-1283 / AT1b).